The chain runs to 272 residues: Shikimate dehydrogenase (NADP(+)) (272 aa).

Residues 14–16 (SKS) and Thr-61 each bind shikimate. Lys-65 serves as the catalytic Proton acceptor. Glu-77 is a binding site for NADP(+). Shikimate-binding residues include Asn-86 and Asp-102. Residues 126-130 (GAGGA), 149-154 (NRTVFR), and Met-213 each bind NADP(+). Shikimate is bound at residue Tyr-215. Position 237 (Gly-237) interacts with NADP(+).

The protein belongs to the shikimate dehydrogenase family. Homodimer.

It carries out the reaction shikimate + NADP(+) = 3-dehydroshikimate + NADPH + H(+). Its pathway is metabolic intermediate biosynthesis; chorismate biosynthesis; chorismate from D-erythrose 4-phosphate and phosphoenolpyruvate: step 4/7. Involved in the biosynthesis of the chorismate, which leads to the biosynthesis of aromatic amino acids. Catalyzes the reversible NADPH linked reduction of 3-dehydroshikimate (DHSA) to yield shikimate (SA). This Escherichia coli O127:H6 (strain E2348/69 / EPEC) protein is Shikimate dehydrogenase (NADP(+)).